A 182-amino-acid chain; its full sequence is MPLLNTITTPYAEAFLQVAESRNEVDEVVTQAKSILELWNSCPEFSDAMSSPVLEVNQKKAALEKLFSSQVTPSFLNLLKLLADRQRIGLLNSVLERLLEIYREQRNIALATITSASALNEDQQSELLKKVQSIAGTDNLEIDLKVDSELLGGFVVNVGSKVIDASIAGQVRRLGLALAKVS.

The protein belongs to the ATPase delta chain family. F-type ATPases have 2 components, F(1) - the catalytic core - and F(0) - the membrane proton channel. F(1) has five subunits: alpha(3), beta(3), gamma(1), delta(1), epsilon(1). CF(0) has four main subunits: a(1), b(1), b'(1) and c(10-14). The alpha and beta chains form an alternating ring which encloses part of the gamma chain. F(1) is attached to F(0) by a central stalk formed by the gamma and epsilon chains, while a peripheral stalk is formed by the delta, b and b' chains.

It is found in the cellular thylakoid membrane. In terms of biological role, f(1)F(0) ATP synthase produces ATP from ADP in the presence of a proton or sodium gradient. F-type ATPases consist of two structural domains, F(1) containing the extramembraneous catalytic core and F(0) containing the membrane proton channel, linked together by a central stalk and a peripheral stalk. During catalysis, ATP synthesis in the catalytic domain of F(1) is coupled via a rotary mechanism of the central stalk subunits to proton translocation. Its function is as follows. This protein is part of the stalk that links CF(0) to CF(1). It either transmits conformational changes from CF(0) to CF(1) or is implicated in proton conduction. This Prochlorococcus marinus (strain NATL1A) protein is ATP synthase subunit delta.